Here is a 518-residue protein sequence, read N- to C-terminus: Bifunctional purine biosynthesis protein PurH (518 aa).

Residues 1-146 (MARIALISVS…KNHESVSILT (146 aa)) enclose the MGS-like domain.

Belongs to the PurH family.

The catalysed reaction is (6R)-10-formyltetrahydrofolate + 5-amino-1-(5-phospho-beta-D-ribosyl)imidazole-4-carboxamide = 5-formamido-1-(5-phospho-D-ribosyl)imidazole-4-carboxamide + (6S)-5,6,7,8-tetrahydrofolate. It catalyses the reaction IMP + H2O = 5-formamido-1-(5-phospho-D-ribosyl)imidazole-4-carboxamide. Its pathway is purine metabolism; IMP biosynthesis via de novo pathway; 5-formamido-1-(5-phospho-D-ribosyl)imidazole-4-carboxamide from 5-amino-1-(5-phospho-D-ribosyl)imidazole-4-carboxamide (10-formyl THF route): step 1/1. The protein operates within purine metabolism; IMP biosynthesis via de novo pathway; IMP from 5-formamido-1-(5-phospho-D-ribosyl)imidazole-4-carboxamide: step 1/1. The polypeptide is Bifunctional purine biosynthesis protein PurH (Prochlorococcus marinus (strain MIT 9211)).